The chain runs to 104 residues: Large ribosomal subunit protein uL24 (104 aa).

Belongs to the universal ribosomal protein uL24 family. In terms of assembly, part of the 50S ribosomal subunit.

In terms of biological role, one of two assembly initiator proteins, it binds directly to the 5'-end of the 23S rRNA, where it nucleates assembly of the 50S subunit. Its function is as follows. One of the proteins that surrounds the polypeptide exit tunnel on the outside of the subunit. In Shewanella piezotolerans (strain WP3 / JCM 13877), this protein is Large ribosomal subunit protein uL24.